The primary structure comprises 76 residues: COMM domain-containing protein 6 (76 aa).

The COMM domain occupies 9–76; sequence KLVDFQWKLG…KDMSNMIETL (68 aa).

Belongs to the COMM domain-containing protein 6 family. In terms of assembly, component of the commander complex consisting of the CCC subcomplex and the retriever subcomplex. Component of the CCC subcomplex.

Scaffold protein in the commander complex that is essential for endosomal recycling of transmembrane cargos; the commander complex is composed of the CCC subcomplex and the retriever subcomplex. This Dictyostelium discoideum (Social amoeba) protein is COMM domain-containing protein 6 (commd6).